The primary structure comprises 345 residues: Probable dual-specificity RNA methyltransferase RlmN (345 aa).

Glutamate 98 serves as the catalytic Proton acceptor. A Radical SAM core domain is found at 104 to 332 (TYKRLTVCVS…VSIRYSRGLE (229 aa)). Cysteine 111 and cysteine 337 form a disulfide bridge. 3 residues coordinate [4Fe-4S] cluster: cysteine 118, cysteine 122, and cysteine 125. S-adenosyl-L-methionine contacts are provided by residues 165 to 166 (GE), serine 195, 218 to 220 (SLH), and asparagine 294. Cysteine 337 (S-methylcysteine intermediate) is an active-site residue.

Belongs to the radical SAM superfamily. RlmN family. [4Fe-4S] cluster serves as cofactor.

It localises to the cytoplasm. It catalyses the reaction adenosine(2503) in 23S rRNA + 2 reduced [2Fe-2S]-[ferredoxin] + 2 S-adenosyl-L-methionine = 2-methyladenosine(2503) in 23S rRNA + 5'-deoxyadenosine + L-methionine + 2 oxidized [2Fe-2S]-[ferredoxin] + S-adenosyl-L-homocysteine. The catalysed reaction is adenosine(37) in tRNA + 2 reduced [2Fe-2S]-[ferredoxin] + 2 S-adenosyl-L-methionine = 2-methyladenosine(37) in tRNA + 5'-deoxyadenosine + L-methionine + 2 oxidized [2Fe-2S]-[ferredoxin] + S-adenosyl-L-homocysteine. Specifically methylates position 2 of adenine 2503 in 23S rRNA and position 2 of adenine 37 in tRNAs. This Trichodesmium erythraeum (strain IMS101) protein is Probable dual-specificity RNA methyltransferase RlmN.